Consider the following 556-residue polypeptide: Formate--tetrahydrofolate ligase (556 aa).

65–72 (TPAGEGKS) contacts ATP.

This sequence belongs to the formate--tetrahydrofolate ligase family.

It catalyses the reaction (6S)-5,6,7,8-tetrahydrofolate + formate + ATP = (6R)-10-formyltetrahydrofolate + ADP + phosphate. Its pathway is one-carbon metabolism; tetrahydrofolate interconversion. The protein is Formate--tetrahydrofolate ligase of Clostridium acetobutylicum (strain ATCC 824 / DSM 792 / JCM 1419 / IAM 19013 / LMG 5710 / NBRC 13948 / NRRL B-527 / VKM B-1787 / 2291 / W).